The following is a 498-amino-acid chain: Galactose-1-phosphate uridylyltransferase (498 aa).

This sequence belongs to the galactose-1-phosphate uridylyltransferase type 2 family.

The protein resides in the cytoplasm. It carries out the reaction alpha-D-galactose 1-phosphate + UDP-alpha-D-glucose = alpha-D-glucose 1-phosphate + UDP-alpha-D-galactose. The protein operates within carbohydrate metabolism; galactose metabolism. In Staphylococcus carnosus (strain TM300), this protein is Galactose-1-phosphate uridylyltransferase.